The following is a 430-amino-acid chain: Histidine--tRNA ligase, chloroplastic (430 aa).

The protein belongs to the class-II aminoacyl-tRNA synthetase family.

Its subcellular location is the plastid. It localises to the chloroplast. The catalysed reaction is tRNA(His) + L-histidine + ATP = L-histidyl-tRNA(His) + AMP + diphosphate + H(+). The sequence is that of Histidine--tRNA ligase, chloroplastic (hisS) from Porphyra purpurea (Red seaweed).